We begin with the raw amino-acid sequence, 229 residues long: Type III pantothenate kinase (229 aa).

6–13 (NIGNSRQH) is a binding site for ATP. Residues Tyr-77 and 81–84 (GIDR) contribute to the substrate site. The active-site Proton acceptor is the Asp-83. Asp-103 serves as a coordination point for K(+). Thr-106 serves as a coordination point for ATP. Thr-159 serves as a coordination point for substrate.

The protein belongs to the type III pantothenate kinase family. In terms of assembly, homodimer. Requires NH4(+) as cofactor. K(+) serves as cofactor.

The protein localises to the cytoplasm. It carries out the reaction (R)-pantothenate + ATP = (R)-4'-phosphopantothenate + ADP + H(+). Its pathway is cofactor biosynthesis; coenzyme A biosynthesis; CoA from (R)-pantothenate: step 1/5. Its function is as follows. Catalyzes the phosphorylation of pantothenate (Pan), the first step in CoA biosynthesis. This chain is Type III pantothenate kinase, found in Gloeobacter violaceus (strain ATCC 29082 / PCC 7421).